A 408-amino-acid chain; its full sequence is LL-diaminopimelate aminotransferase (408 aa).

Tyr15 and Gly42 together coordinate substrate. Pyridoxal 5'-phosphate is bound by residues Tyr72, 108–109 (SK), Tyr132, Asn187, Tyr218, and 246–248 (SFS). The substrate site is built by Lys109, Tyr132, and Asn187. N6-(pyridoxal phosphate)lysine is present on Lys249. Residues Arg257 and Asn292 each coordinate pyridoxal 5'-phosphate. Asn292 and Arg388 together coordinate substrate.

Belongs to the class-I pyridoxal-phosphate-dependent aminotransferase family. LL-diaminopimelate aminotransferase subfamily. Homodimer. Requires pyridoxal 5'-phosphate as cofactor.

It carries out the reaction (2S,6S)-2,6-diaminopimelate + 2-oxoglutarate = (S)-2,3,4,5-tetrahydrodipicolinate + L-glutamate + H2O + H(+). It participates in amino-acid biosynthesis; L-lysine biosynthesis via DAP pathway; LL-2,6-diaminopimelate from (S)-tetrahydrodipicolinate (aminotransferase route): step 1/1. Involved in the synthesis of meso-diaminopimelate (m-DAP or DL-DAP), required for both lysine and peptidoglycan biosynthesis. Catalyzes the direct conversion of tetrahydrodipicolinate to LL-diaminopimelate. The chain is LL-diaminopimelate aminotransferase from Synechococcus sp. (strain CC9902).